A 363-amino-acid polypeptide reads, in one-letter code: Alanine racemase (363 aa).

Lys39 acts as the Proton acceptor; specific for D-alanine in catalysis. The residue at position 39 (Lys39) is an N6-(pyridoxal phosphate)lysine. A substrate-binding site is contributed by Arg134. Residue Tyr251 is the Proton acceptor; specific for L-alanine of the active site. Substrate is bound at residue Met299.

Belongs to the alanine racemase family. Requires pyridoxal 5'-phosphate as cofactor.

It catalyses the reaction L-alanine = D-alanine. Its pathway is amino-acid biosynthesis; D-alanine biosynthesis; D-alanine from L-alanine: step 1/1. Its function is as follows. Catalyzes the interconversion of L-alanine and D-alanine. May also act on other amino acids. In Thermodesulfovibrio yellowstonii (strain ATCC 51303 / DSM 11347 / YP87), this protein is Alanine racemase (alr).